The following is a 141-amino-acid chain: ATP synthase F(0) complex subunit C3, mitochondrial (141 aa).

The N-terminal 66 residues, 1–66 (MFACAKLACT…REFQTTAVNR (66 aa)), are a transit peptide targeting the mitochondrion. A helical membrane pass occupies residues 82–102 (VGVAGSGAGIGTVFGSLIIGY). Lys-109 is subject to N6,N6,N6-trimethyllysine. Residues 117–137 (ILGFALSEAMGLFCLMVAFLI) form a helical membrane-spanning segment.

It belongs to the ATPase C chain family. In terms of assembly, F-type ATPases have 2 components, CF(1) - the catalytic core - and CF(0) - the membrane proton channel. CF(1) has five subunits: alpha(3), beta(3), gamma(1), delta(1), epsilon(1). CF(0) has three main subunits: a, b and c. Interacts with TMEM70 and TMEM242. Post-translationally, trimethylated by ATPSCKMT at Lys-109. Methylation is required for proper incorporation of the C subunit into the ATP synthase complex and mitochondrial respiration.

The protein resides in the mitochondrion membrane. Functionally, mitochondrial membrane ATP synthase (F(1)F(0) ATP synthase or Complex V) produces ATP from ADP in the presence of a proton gradient across the membrane which is generated by electron transport complexes of the respiratory chain. F-type ATPases consist of two structural domains, F(1) - containing the extramembraneous catalytic core and F(0) - containing the membrane proton channel, linked together by a central stalk and a peripheral stalk. During catalysis, ATP synthesis in the catalytic domain of F(1) is coupled via a rotary mechanism of the central stalk subunits to proton translocation. Part of the complex F(0) domain. A homomeric c-ring of probably 10 subunits is part of the complex rotary element. The chain is ATP synthase F(0) complex subunit C3, mitochondrial from Bos taurus (Bovine).